The sequence spans 110 residues: Large ribosomal subunit protein uL22 (110 aa).

Belongs to the universal ribosomal protein uL22 family. As to quaternary structure, part of the 50S ribosomal subunit.

This protein binds specifically to 23S rRNA; its binding is stimulated by other ribosomal proteins, e.g. L4, L17, and L20. It is important during the early stages of 50S assembly. It makes multiple contacts with different domains of the 23S rRNA in the assembled 50S subunit and ribosome. Functionally, the globular domain of the protein is located near the polypeptide exit tunnel on the outside of the subunit, while an extended beta-hairpin is found that lines the wall of the exit tunnel in the center of the 70S ribosome. The protein is Large ribosomal subunit protein uL22 of Syntrophobacter fumaroxidans (strain DSM 10017 / MPOB).